The following is an 87-amino-acid chain: Signal recognition particle 19 kDa protein (87 aa).

It belongs to the SRP19 family. Part of the signal recognition particle protein translocation system, which is composed of SRP and FtsY. Archaeal SRP consists of a 7S RNA molecule of 300 nucleotides and two protein subunits: SRP54 and SRP19.

The protein resides in the cytoplasm. Involved in targeting and insertion of nascent membrane proteins into the cytoplasmic membrane. Binds directly to 7S RNA and mediates binding of the 54 kDa subunit of the SRP. The protein is Signal recognition particle 19 kDa protein of Methanocaldococcus jannaschii (strain ATCC 43067 / DSM 2661 / JAL-1 / JCM 10045 / NBRC 100440) (Methanococcus jannaschii).